We begin with the raw amino-acid sequence, 104 residues long: SPbeta prophage-derived stress response protein SCP1 (104 aa).

It localises to the cytoplasm. In Bacillus subtilis (strain 168), this protein is SPbeta prophage-derived stress response protein SCP1 (yorD).